A 274-amino-acid polypeptide reads, in one-letter code: Imidazole glycerol phosphate synthase subunit HisF (274 aa).

Active-site residues include Asp11 and Asp134.

Belongs to the HisA/HisF family. As to quaternary structure, heterodimer of HisH and HisF.

It localises to the cytoplasm. It catalyses the reaction 5-[(5-phospho-1-deoxy-D-ribulos-1-ylimino)methylamino]-1-(5-phospho-beta-D-ribosyl)imidazole-4-carboxamide + L-glutamine = D-erythro-1-(imidazol-4-yl)glycerol 3-phosphate + 5-amino-1-(5-phospho-beta-D-ribosyl)imidazole-4-carboxamide + L-glutamate + H(+). It participates in amino-acid biosynthesis; L-histidine biosynthesis; L-histidine from 5-phospho-alpha-D-ribose 1-diphosphate: step 5/9. IGPS catalyzes the conversion of PRFAR and glutamine to IGP, AICAR and glutamate. The HisF subunit catalyzes the cyclization activity that produces IGP and AICAR from PRFAR using the ammonia provided by the HisH subunit. The chain is Imidazole glycerol phosphate synthase subunit HisF from Methanobrevibacter smithii (strain ATCC 35061 / DSM 861 / OCM 144 / PS).